The sequence spans 452 residues: Disintegrin and metalloproteinase domain-containing protein 11 (452 aa).

In terms of domain architecture, Peptidase M12B spans R1–P120. Residues R1–N417 are Extracellular-facing. Disulfide bonds link C31-C115, C74-C99, and C76-C83. One can recognise a Disintegrin domain in the interval P126 to D214. N149 carries an N-linked (GlcNAc...) asparagine glycan. A disulfide bridge links C186 with C206. N-linked (GlcNAc...) asparagine glycosylation is found at N288 and N356. 3 cysteine pairs are disulfide-bonded: C360–C375, C369–C381, and C383–C392. One can recognise an EGF-like domain in the interval C360–T416. Residues I418–G438 traverse the membrane as a helical segment. At W439–G452 the chain is on the cytoplasmic side.

The precursor is cleaved by a furin endopeptidase. In terms of tissue distribution, detected in testis and barely expressed in heart and muscle. Not detectable in liver.

It is found in the presynaptic cell membrane. Its subcellular location is the perikaryon. It localises to the cell projection. The protein localises to the axon. In terms of biological role, probable ligand for integrin in the brain. This is a non-catalytic metalloprotease-like protein. This is Disintegrin and metalloproteinase domain-containing protein 11 (adam11) from Xenopus laevis (African clawed frog).